The primary structure comprises 169 residues: Cell division inhibitor SulA (169 aa).

The segment at 106–112 is ftsZ binding; sequence ALRTGNY. A lon protease binding region spans residues 162 to 169; it reads KIHSNLYH.

Belongs to the SulA family. In terms of assembly, interacts with FtsZ. Post-translationally, is rapidly cleaved and degraded by the Lon protease once DNA damage is repaired.

Its function is as follows. Component of the SOS system and an inhibitor of cell division. Accumulation of SulA causes rapid cessation of cell division and the appearance of long, non-septate filaments. In the presence of GTP, binds a polymerization-competent form of FtsZ in a 1:1 ratio, thus inhibiting FtsZ polymerization and therefore preventing it from participating in the assembly of the Z ring. This mechanism prevents the premature segregation of damaged DNA to daughter cells during cell division. This Citrobacter koseri (strain ATCC BAA-895 / CDC 4225-83 / SGSC4696) protein is Cell division inhibitor SulA.